The primary structure comprises 314 residues: Acetaldehyde dehydrogenase 1 (314 aa).

NAD(+) is bound at residue 16–19; the sequence is SGNI. The active-site Acyl-thioester intermediate is the C134. NAD(+) is bound by residues 165–173 and N292; that span reads SAGPGTRAN.

Belongs to the acetaldehyde dehydrogenase family.

The enzyme catalyses acetaldehyde + NAD(+) + CoA = acetyl-CoA + NADH + H(+). This is Acetaldehyde dehydrogenase 1 (mhpF) from Cupriavidus necator (strain ATCC 17699 / DSM 428 / KCTC 22496 / NCIMB 10442 / H16 / Stanier 337) (Ralstonia eutropha).